The chain runs to 155 residues: MLP-like protein 423 (155 aa).

It belongs to the MLP family.

The protein is MLP-like protein 423 (MLP423) of Arabidopsis thaliana (Mouse-ear cress).